Reading from the N-terminus, the 350-residue chain is HTH-type DNA-binding transcriptional activator EutR (350 aa).

Residues 243-344 enclose the HTH araC/xylS-type domain; the sequence is SRAREYVLEN…AEKPSLTLHQ (102 aa). DNA-binding regions (H-T-H motif) lie at residues 260–281 and 311–334; these read LDLC…HAIL and VKDA…QQLF.

It functions in the pathway amine and polyamine degradation; ethanolamine degradation. Activates the transcription of the eut operon, allowing utilization of ethanolamine (EA). Positively regulates its own transcription. Probably binds EA and vitamin B12 as effectors. Competes with ethanolamine ammonia-lysase (EAL, the first enzyme in the EA degradation pathway) for adenosylcobalamin. Ethanolamine-associated signaling mediated via this protein, but not EA degradation, impacts S.typhimurium survival within macrophages. Binds the promoter of ssrB and eutS in vitro; in mouse infection models binding to ssrB probably induces all 4 operons of pathogenicity island SPI-2. In terms of biological role, expression of the eut operon allows this bacteria to use ethanolamine (EA) as a carbon, nitrogen and energy source. It relies on cobalamin (vitamin B12) both as a cofactor for the ethanolamine ammonia-lyase (EAL) activity and to induce the operon. EA enhances bacterial survival in macrophages in a concentration-dependent manner, suggesting it is an important nutrient in infection. This is HTH-type DNA-binding transcriptional activator EutR from Salmonella typhimurium (strain LT2 / SGSC1412 / ATCC 700720).